A 603-amino-acid polypeptide reads, in one-letter code: UvrABC system protein C (603 aa).

Residues 17-94 form the GIY-YIG domain; that stretch reads TTSGCYKMLN…IKTHKPDYNV (78 aa).

Belongs to the UvrC family. Interacts with UvrB in an incision complex.

The protein resides in the cytoplasm. Functionally, the UvrABC repair system catalyzes the recognition and processing of DNA lesions. UvrC both incises the 5' and 3' sides of the lesion. The N-terminal half is responsible for the 3' incision and the C-terminal half is responsible for the 5' incision. The chain is UvrABC system protein C from Borreliella burgdorferi (strain ATCC 35210 / DSM 4680 / CIP 102532 / B31) (Borrelia burgdorferi).